A 616-amino-acid polypeptide reads, in one-letter code: DEAD-box ATP-dependent RNA helicase 53, mitochondrial (616 aa).

The transit peptide at 1-81 directs the protein to the mitochondrion; that stretch reads MITTVLRRSL…DFRASMVSQA (81 aa). Positions 104–132 match the Q motif motif; that stretch reads LAISELGISPEIVKALSSKGIEKLFPIQK. Residues 135 to 309 enclose the Helicase ATP-binding domain; the sequence is LEPAMEGRDM…KKYLNNPLTV (175 aa). Position 148 to 155 (148 to 155) interacts with ATP; sequence ARTGTGKT. The short motif at 257–260 is the DEAD box element; it reads DEAD. One can recognise a Helicase C-terminal domain in the interval 338–482; it reads IIGPLVTEHA…ELPSIAVERG (145 aa). Residues 489–616 form a disordered region; that stretch reads GIGSRSGGSF…FGSNDGKRSY (128 aa). Gly residues-rich tracts occupy residues 492 to 501 and 508 to 531; these read SRSGGSFGGG and SFGGRSGGGGYGGSSGGYGGGRSG. 2 stretches are compositionally biased toward low complexity: residues 532–568 and 578–587; these read GSSNRYSGDSDRSGFGSFGMRSPEGYGSDRSSQSGGR and GSSNNRSSGF.

This sequence belongs to the DEAD box helicase family. DDX21/DDX50 subfamily.

The protein localises to the mitochondrion. It catalyses the reaction ATP + H2O = ADP + phosphate + H(+). The sequence is that of DEAD-box ATP-dependent RNA helicase 53, mitochondrial (RH53) from Arabidopsis thaliana (Mouse-ear cress).